Here is a 394-residue protein sequence, read N- to C-terminus: MKKRFERIFLIVMDSVGIGEAPDAKEFGDEGANTLGSIAEAFNGLHVPELEKLGLGKIAPLKGVKNVPTPLASYGIMQEASLGKDTMTGHWEIMGLHITKPFQVFPDGFPTELLEQLKSETGRGIIGNKVASGTEILDELGEEHVKTGDLIVYTSADSVLQIAAHEEVVPLEELYDICEKARKLTLAPEYMVGRVIARPFVGEPGKWKRTANRHDYALKPFGRTVMNTLEDAGLASIALGKISDIYDGEGVTKAVRTTSNEDGMDKLAEQINTSFEGLCFLNLVDFDALYGHRRDVIGYGEAIMAFDQRLGEILPQLGDEDLLIVTADHGNDPTHTGTDHTREYVPLLVYNKGIKPVNLGKRRTFADIGATVADNFQVERPSNGTSFLTELKPE.

Residues aspartate 14, aspartate 287, histidine 292, aspartate 328, histidine 329, and histidine 340 each coordinate Mn(2+).

Belongs to the phosphopentomutase family. Requires Mn(2+) as cofactor.

The protein localises to the cytoplasm. The catalysed reaction is 2-deoxy-alpha-D-ribose 1-phosphate = 2-deoxy-D-ribose 5-phosphate. It carries out the reaction alpha-D-ribose 1-phosphate = D-ribose 5-phosphate. The protein operates within carbohydrate degradation; 2-deoxy-D-ribose 1-phosphate degradation; D-glyceraldehyde 3-phosphate and acetaldehyde from 2-deoxy-alpha-D-ribose 1-phosphate: step 1/2. Isomerase that catalyzes the conversion of deoxy-ribose 1-phosphate (dRib-1-P) and ribose 1-phosphate (Rib-1-P) to deoxy-ribose 5-phosphate (dRib-5-P) and ribose 5-phosphate (Rib-5-P), respectively. In Shouchella clausii (strain KSM-K16) (Alkalihalobacillus clausii), this protein is Phosphopentomutase.